The chain runs to 312 residues: MSDSFCPDCKKHTEVAFDHSAGDTVCTECGLVLEAHSVDETSEWRTFANESSDNDPVRVGGPTNPLLTDGGLSTVIAKPNGAQGEFLSSSLGRWQNRGSNPDRSLILAFRTIANMADRLGLVATIKDRANEIYKKVEDLKSIRGRNQDAILAACLYIACRQEDRPRTVKEICSVANGATKKEIGRAKEFIVKQLEVEMGQSMEMGTIHAGDFLRRFCSTLGMNNQAVKAAQEAVQRSEELDIRRSPISIAAAVIYMITQLSDDKKPLKDISLATGVAEGTIRNSYKDLYPYASRLIPNTYAKEEDLKNLCTP.

The TFIIB-type zinc finger occupies 2 to 34 (SDSFCPDCKKHTEVAFDHSAGDTVCTECGLVLE). Residues Cys6, Cys9, Cys26, and Cys29 each coordinate Zn(2+). A run of 2 repeats spans residues 115–192 (MADR…FIVK) and 216–290 (FCST…DLYP).

The protein belongs to the TFIIB family. In terms of assembly, associates with TFIID-IIA (DA complex) to form TFIID-IIA-IIB (DAB-complex) which is then recognized by polymerase II. Interacts with TBP2.

Its subcellular location is the nucleus. In terms of biological role, general factor that plays a major role in the activation of eukaryotic genes transcribed by RNA polymerase II. In Oryza sativa subsp. japonica (Rice), this protein is Transcription initiation factor IIB (TFIIB).